A 611-amino-acid polypeptide reads, in one-letter code: Urease subunit alpha 2 (611 aa).

Positions 154 to 611 (GGIDSHIHFI…LPMAQRYFLF (458 aa)) constitute a Urease domain. Positions 159, 161, and 242 each coordinate Ni(2+). An N6-carboxylysine modification is found at Lys242. His244 is a substrate binding site. Ni(2+) contacts are provided by His271 and His297. The active-site Proton donor is the His345. Asp385 lines the Ni(2+) pocket. A disordered region spans residues 411–434 (GHLAPDQSAKTEQSLDNIMLSPTD). Residues 418-434 (SAKTEQSLDNIMLSPTD) are compositionally biased toward polar residues.

This sequence belongs to the metallo-dependent hydrolases superfamily. Urease alpha subunit family. In terms of assembly, heterotrimer of UreA (gamma), UreB (beta) and UreC (alpha) subunits. Three heterotrimers associate to form the active enzyme. Ni cation is required as a cofactor. In terms of processing, carboxylation allows a single lysine to coordinate two nickel ions.

The protein localises to the cytoplasm. It catalyses the reaction urea + 2 H2O + H(+) = hydrogencarbonate + 2 NH4(+). It participates in nitrogen metabolism; urea degradation; CO(2) and NH(3) from urea (urease route): step 1/1. In Psychrobacter cryohalolentis (strain ATCC BAA-1226 / DSM 17306 / VKM B-2378 / K5), this protein is Urease subunit alpha 2.